A 104-amino-acid polypeptide reads, in one-letter code: Large ribosomal subunit protein bL21 (104 aa).

It belongs to the bacterial ribosomal protein bL21 family. Part of the 50S ribosomal subunit. Contacts protein L20.

In terms of biological role, this protein binds to 23S rRNA in the presence of protein L20. This Streptococcus pneumoniae serotype 2 (strain D39 / NCTC 7466) protein is Large ribosomal subunit protein bL21.